Consider the following 832-residue polypeptide: Protein translocase subunit SecA (832 aa).

Residues glutamine 87, glycine 105–threonine 109, and aspartate 512 contribute to the ATP site.

This sequence belongs to the SecA family. In terms of assembly, monomer and homodimer. Part of the essential Sec protein translocation apparatus which comprises SecA, SecYEG and auxiliary proteins SecDF-YajC and YidC.

It localises to the cell membrane. The protein resides in the cytoplasm. The enzyme catalyses ATP + H2O + cellular proteinSide 1 = ADP + phosphate + cellular proteinSide 2.. Part of the Sec protein translocase complex. Interacts with the SecYEG preprotein conducting channel. Has a central role in coupling the hydrolysis of ATP to the transfer of proteins into and across the cell membrane, serving as an ATP-driven molecular motor driving the stepwise translocation of polypeptide chains across the membrane. The protein is Protein translocase subunit SecA of Wigglesworthia glossinidia brevipalpis.